A 94-amino-acid polypeptide reads, in one-letter code: Co-chaperonin GroES (94 aa).

It belongs to the GroES chaperonin family. In terms of assembly, heptamer of 7 subunits arranged in a ring. Interacts with the chaperonin GroEL.

The protein resides in the cytoplasm. Together with the chaperonin GroEL, plays an essential role in assisting protein folding. The GroEL-GroES system forms a nano-cage that allows encapsulation of the non-native substrate proteins and provides a physical environment optimized to promote and accelerate protein folding. GroES binds to the apical surface of the GroEL ring, thereby capping the opening of the GroEL channel. This is Co-chaperonin GroES from Streptococcus pneumoniae (strain Taiwan19F-14).